A 1400-amino-acid polypeptide reads, in one-letter code: DNA-directed RNA polymerase subunit beta' (1400 aa).

4 residues coordinate Zn(2+): Cys71, Cys73, Cys86, and Cys89. 3 residues coordinate Mg(2+): Asp462, Asp464, and Asp466. Residues Cys810, Cys884, Cys891, and Cys894 each coordinate Zn(2+). The tract at residues 1377 to 1400 (REKQATIVPPAAPEAEPLALPPVE) is disordered.

Belongs to the RNA polymerase beta' chain family. The RNAP catalytic core consists of 2 alpha, 1 beta, 1 beta' and 1 omega subunit. When a sigma factor is associated with the core the holoenzyme is formed, which can initiate transcription. It depends on Mg(2+) as a cofactor. Zn(2+) serves as cofactor.

It catalyses the reaction RNA(n) + a ribonucleoside 5'-triphosphate = RNA(n+1) + diphosphate. In terms of biological role, DNA-dependent RNA polymerase catalyzes the transcription of DNA into RNA using the four ribonucleoside triphosphates as substrates. The chain is DNA-directed RNA polymerase subunit beta' from Rhodopseudomonas palustris (strain HaA2).